The following is a 127-amino-acid chain: Odontogenesis-associated phosphoprotein (127 aa).

Positions 1 to 23 are cleaved as a signal peptide; it reads MAPGFHFSWLLVSWLVVTTVKGQ.

In terms of tissue distribution, expressed in enamel organs and not expressed in the heart, kidney, or spleen.

It localises to the secreted. Its function is as follows. May promote nucleation of hydroxyapatite. In Rattus norvegicus (Rat), this protein is Odontogenesis-associated phosphoprotein.